The primary structure comprises 67 residues: Cell division protein ZapB (67 aa).

Residues 3–59 (LELLSQLETKIQTALETIELLKLELDEEKEKAANLAEQNHQLKQELSSWNDKITGLV) are a coiled coil.

It belongs to the ZapB family. In terms of assembly, homodimer. The ends of the coiled-coil dimer bind to each other, forming polymers. Interacts with FtsZ.

The protein localises to the cytoplasm. Functionally, non-essential, abundant cell division factor that is required for proper Z-ring formation. It is recruited early to the divisome by direct interaction with FtsZ, stimulating Z-ring assembly and thereby promoting cell division earlier in the cell cycle. Its recruitment to the Z-ring requires functional FtsA or ZipA. The chain is Cell division protein ZapB from Shewanella amazonensis (strain ATCC BAA-1098 / SB2B).